Consider the following 613-residue polypeptide: Potassium voltage-gated channel subfamily A member 5 (613 aa).

Residues 1–108 (MEIALVPLEN…EGDPGLGTVE (108 aa)) are disordered. Residues 1–211 (MEIALVPLEN…FYQLGDEAME (211 aa)) are tetramerization domain. At 1-247 (MEIALVPLEN…LIFEYPESSG (247 aa)) the chain is on the cytoplasmic side. Positions 45-62 (GPKEPAPKGRGAQRDADS) are enriched in basic and acidic residues. Tandem repeats lie at residues 61 to 71 (DSGVRPLPPLP) and 72 to 82 (DPGVRPLPPLP). The tract at residues 61–82 (DSGVRPLPPLPDPGVRPLPPLP) is 2 X 11 AA tandem repeat of D-[SP]-G-V-R-P-L-P-P-L-P. The span at 66–83 (PLPPLPDPGVRPLPPLPE) shows a compositional bias: pro residues. Residues 84-93 (ELPRPRRPPP) are compositionally biased toward basic and acidic residues. A Glycyl lysine isopeptide (Lys-Gly) (interchain with G-Cter in SUMO) cross-link involves residue K221. Residues 248 to 269 (SARAIAIVSVLVILISIITFCL) form a helical membrane-spanning segment. At 270–323 (ETLPEFRDERELLRHPPAPHQPPAPAPGANGSGVMAPPSGPTVAPLLPRTLADP) the chain is on the extracellular side. Positions 282–304 (LRHPPAPHQPPAPAPGANGSGVM) are disordered. The span at 285–295 (PPAPHQPPAPA) shows a compositional bias: pro residues. A helical transmembrane segment spans residues 324–345 (FFIVETTCVIWFTFELLVRFFA). C346 carries the S-palmitoyl cysteine lipid modification. Residues 346-356 (CPSKAGFSRNI) are Cytoplasmic-facing. A helical transmembrane segment spans residues 357-377 (MNIIDVVAIFPYFITLGTELA). Residues 378 to 395 (EQQPGGGGGGQNGQQAMS) are Extracellular-facing. Residues 396-416 (LAILRVIRLVRVFRIFKLSRH) traverse the membrane as a helical; Voltage-sensor segment. Over 417–431 (SKGLQILGKTLQASM) the chain is Cytoplasmic. Residues 418-431 (KGLQILGKTLQASM) are S4-S5 linker. The helical transmembrane segment at 432-453 (RELGLLIFFLFIGVILFSSAVY) threads the bilayer. At 454-467 (FAEADNQGTHFSSI) the chain is on the extracellular side. An intramembrane region (helical) is located at residues 468 to 479 (PDAFWWAVVTMT). A Selectivity filter motif is present at residues 480 to 485 (TVGYGD). The stretch at 480 to 487 (TVGYGDMR) is an intramembrane region. The Extracellular portion of the chain corresponds to 488–494 (PITVGGK). A helical membrane pass occupies residues 495 to 523 (IVGSLCAIAGVLTIALPVPVIVSNFNYFY). Topologically, residues 524-613 (HRETDHEEPA…CLDTSRETDL (90 aa)) are cytoplasmic. Residues 532–559 (PAVLKEEQGTQSQGPGLDRGVQRKVSGS) are disordered. K536 participates in a covalent cross-link: Glycyl lysine isopeptide (Lys-Gly) (interchain with G-Cter in SUMO). S557 bears the Phosphoserine; by PKA mark. The short motif at 611–613 (TDL) is the PDZ-binding element.

Belongs to the potassium channel family. A (Shaker) (TC 1.A.1.2) subfamily. Kv1.5/KCNA5 sub-subfamily. As to quaternary structure, homotetramer and heterotetramer of potassium channel proteins. Interacts with DLG1, which enhances channel currents. Forms a ternary complex with DLG1 and CAV3. Interacts with KCNAB1. Interacts with UBE2I. Interacts with XIRP2; the interaction is required for normal action potential configuration in the heart. In terms of processing, glycosylated. Post-translationally, sumoylated on Lys-221, and Lys-536, preferentially with SUMO3. Sumoylation regulates the voltage sensitivity of the channel. In terms of tissue distribution, pancreatic islets and insulinoma.

Its subcellular location is the cell membrane. It carries out the reaction K(+)(in) = K(+)(out). Inhibited by 4-aminopyridine, nicotine, bepridil, correolide, and endothelin-1. In terms of biological role, voltage-gated potassium channel that mediates transmembrane potassium transport in excitable membranes. Forms tetrameric potassium-selective channels through which potassium ions pass in accordance with their electrochemical gradient. The channel alternates between opened and closed conformations in response to the voltage difference across the membrane. Can form functional homotetrameric channels and heterotetrameric channels that contain variable proportions of KCNA1, KCNA2, KCNA4, KCNA5, and possibly other family members as well; channel properties depend on the type of alpha subunits that are part of the channel. Channel properties are modulated by cytoplasmic beta subunits that regulate the subcellular location of the alpha subunits and promote rapid inactivation. Homotetrameric channels display rapid activation and slow inactivation. Required for normal electrical conduction including formation of the infranodal ventricular conduction system and normal action potential configuration, as a result of its interaction with XIRP2. May play a role in regulating the secretion of insulin in normal pancreatic islets. Its function is as follows. Exhibits a faster depolarization rate, reduced voltage-dependent recovery from inactivation and an excessive cumulative inactivation. This is Potassium voltage-gated channel subfamily A member 5 (KCNA5) from Homo sapiens (Human).